The following is a 59-amino-acid chain: Large ribosomal subunit protein bL33 (59 aa).

This sequence belongs to the bacterial ribosomal protein bL33 family.

In Borrelia recurrentis (strain A1), this protein is Large ribosomal subunit protein bL33.